The following is a 92-amino-acid chain: Small ribosomal subunit protein uS19 (92 aa).

It belongs to the universal ribosomal protein uS19 family.

Its function is as follows. Protein S19 forms a complex with S13 that binds strongly to the 16S ribosomal RNA. This chain is Small ribosomal subunit protein uS19, found in Bradyrhizobium diazoefficiens (strain JCM 10833 / BCRC 13528 / IAM 13628 / NBRC 14792 / USDA 110).